Here is a 261-residue protein sequence, read N- to C-terminus: Glucosamine-6-phosphate deaminase (261 aa).

The Proton acceptor; for enolization step role is filled by Asp67. Asn135 functions as the For ring-opening step in the catalytic mechanism. His137 (proton acceptor; for ring-opening step) is an active-site residue. Catalysis depends on Glu142, which acts as the For ring-opening step.

The protein belongs to the glucosamine/galactosamine-6-phosphate isomerase family. NagB subfamily. As to quaternary structure, homohexamer.

It catalyses the reaction alpha-D-glucosamine 6-phosphate + H2O = beta-D-fructose 6-phosphate + NH4(+). It participates in amino-sugar metabolism; N-acetylneuraminate degradation; D-fructose 6-phosphate from N-acetylneuraminate: step 5/5. Its function is as follows. Catalyzes the reversible isomerization-deamination of glucosamine 6-phosphate (GlcN6P) to form fructose 6-phosphate (Fru6P) and ammonium ion. This is Glucosamine-6-phosphate deaminase from Hahella chejuensis (strain KCTC 2396).